A 340-amino-acid chain; its full sequence is GATA transcription factor 20 (340 aa).

The interval 1–88 (MSHHDGSKPY…MEEDEDAQHH (88 aa)) is disordered. Residues 25-47 (ADDAAAHVAPTVDHLAAVAAEAE) show a composition bias toward low complexity. The span at 48-60 (AMARFEEEHRALG) shows a compositional bias: basic and acidic residues. The span at 61–84 (AEEEYEEEEDELEEEEEEMEEDED) shows a compositional bias: acidic residues. One can recognise a Tify domain in the interval 121–156 (QPMASNQLTLSFQGEVYVFDSVSPDKVQAVLLLLGG). In terms of domain architecture, CCT spans 182 to 224 (RVASLMRFREKRKERNFDKKIRYSVRKEVALRMQRNRGQFTSS). The segment at 215 to 253 (QRNRGQFTSSKPKGDEATSELTASDGSPNWGSVEGRPPS) is disordered. The segment covering 233–244 (SELTASDGSPNW) has biased composition (polar residues). The GATA-type zinc finger occupies 257-284 (CHHCGINAKATPMMRRGPDGPRTLCNAC). Positions 313–325 (DGNGSAAAPTTEQ) are enriched in polar residues. The tract at residues 313–340 (DGNGSAAAPTTEQEIPAPATVNGHESST) is disordered.

The protein belongs to the type IV zinc-finger family. Class C subfamily.

The protein resides in the nucleus. Its function is as follows. Transcriptional activator that specifically binds 5'-GATA-3' or 5'-GAT-3' motifs within gene promoters. The sequence is that of GATA transcription factor 20 from Oryza sativa subsp. japonica (Rice).